Consider the following 331-residue polypeptide: Protein REVEILLE 6 (331 aa).

Residues 67–121 (TITKSRESWTEPEHDKFLEALQLFDRDWKKIEAFIGSKTVIQIRSHAQKYFLKVQ) form the HTH myb-type domain. Residues 94-117 (WKKIEAFIGSKTVIQIRSHAQKYF) constitute a DNA-binding region (H-T-H motif). Disordered stretches follow at residues 122–166 (KSGT…EPND), 203–237 (LPKA…GNVG), and 309–331 (SETA…EIST). Over residues 150 to 165 (VQLQVPGSFKSTSEPN) the composition is skewed to polar residues. Over residues 211-220 (NNNCSSSSEN) the composition is skewed to low complexity. 2 stretches are compositionally biased toward basic and acidic residues: residues 226 to 235 (SNRDARDHGN) and 322 to 331 (LNKDPPEIST).

Its subcellular location is the nucleus. Its function is as follows. Probable transcription factor. RVE4, RVE6 and RVE8 are components of the circadian system acting synergistically to regulate flowering time, redundantly to regulate leaf growth, and antagonistically to regulate hypocotyl elongation; their action seems independent of ZTL and HY5. The protein is Protein REVEILLE 6 of Arabidopsis thaliana (Mouse-ear cress).